The sequence spans 314 residues: Cathepsin L 1 (314 aa).

An N-terminal signal peptide occupies residues 1–24 (MMLLGASLYLNNTQEVSDEIDTAN). Residues 25–109 (LYANWKMKYN…NAANSNFQYK (85 aa)) constitute a propeptide, activation peptide. Cystine bridges form between Cys-132/Cys-175, Cys-166/Cys-207, and Cys-259/Cys-302. Residue Cys-135 is part of the active site. Active-site residues include His-265 and Asn-282.

It belongs to the peptidase C1 family.

The protein resides in the secreted. It carries out the reaction Specificity close to that of papain. As compared to cathepsin B, cathepsin L exhibits higher activity toward protein substrates, but has little activity on Z-Arg-Arg-NHMec, and no peptidyl-dipeptidase activity.. In terms of biological role, may be involved in extracellular digestion. This chain is Cathepsin L 1, found in Paramecium tetraurelia.